The following is a 132-amino-acid chain: Spermatogenesis-associated protein 33 (132 aa).

The segment at 1–60 (MGQSKSKPREKKEEEKSTTTLVTKSKEKVMEKEAKQSDKESQPAESLLFATSKHSRPSSS) is interaction with ATG16L1. A disordered region spans residues 1–81 (MGQSKSKPRE…SKKRSVIPQI (81 aa)). A compositionally biased stretch (basic and acidic residues) spans 24-42 (KSKEKVMEKEAKQSDKESQ). An interaction with VDAC2 region spans residues 61-132 (SEDKPETKQR…IAAYDVHNTE (72 aa)). Residues 79 to 84 (PQIIIT) carry the PQIIIT motif. Ser-87 bears the Phosphoserine mark. Residues 110–132 (DWGPYHRHRSPSTIAAYDVHNTE) are disordered.

In terms of assembly, interacts (via PQIIIT motif) with PPP3R2 and PPP3CC. Interacts with VDAC2. Interacts with ATG16L1 (via WD repeats). Interacts with PPP3R1, PPP3CA and PPP3CB. In terms of tissue distribution, predominantly expressed in the testis (at protein level). Expressed in the sperm midpiece (at protein level).

It localises to the cytoplasm. Its subcellular location is the cytosol. It is found in the nucleus. The protein resides in the mitochondrion. Plays an important role in sperm motility and male fertility. Required for sperm midpiece flexibility and for the localization of sperm calcineurin to the mitochondria. Promotes mitophagy as well as acts as an autophagy mediator in male germline cells. Links damaged mitochondria to autophagosomes via its binding to the outer mitochondrial membrane protein VDAC2, as well as to key autophagy machinery component ATG16L1. This is Spermatogenesis-associated protein 33 (Spata33) from Mus musculus (Mouse).